Consider the following 1203-residue polypeptide: Delphilin (1203 aa).

In terms of domain architecture, PDZ 1 spans 1–79 (MPATNQGWPE…VPPSLGVLPG (79 aa)). Residue A3 is the site of S-palmitoyl cysteine attachment. The disordered stretch occupies residues 215 to 270 (GAQRLRRSRSEERPERLLVSTRASAAPRRPDEPPPRKATSLLGGRTGPGGPRRTVR). The segment covering 231–241 (LLVSTRASAAP) has biased composition (low complexity). The PDZ 2 domain maps to 268-345 (TVRVYKGNKS…MPTLVVEEGP (78 aa)). Position 303 is a phosphoserine (S303). Disordered stretches follow at residues 466–541 (ESSL…TPNP), 563–586 (IGTM…GPRT), 611–656 (LASP…PPSR), and 710–821 (SFVT…SHMS). Polar residues predominate over residues 500 to 509 (RSQGLETSLS). A phosphoserine mark is found at S572, S613, S644, and S647. The segment covering 611–625 (LASPSSSESHPYASL) has biased composition (low complexity). The segment covering 715–740 (ERSSASECVSSSEEGSSLTYSSISDH) has biased composition (low complexity). Pro residues predominate over residues 741–756 (IPPPPLSPPPPPPLPF). Polar residues predominate over residues 774–784 (QSLTKPLTQIN). Residues 786–803 (PVPPPPPPPLPPPVPCAP) show a composition bias toward pro residues. Residues 812–1203 (HRRSETSHMS…SSGMVSPLAW (392 aa)) enclose the FH2 domain.

In terms of assembly, interacts with C-terminus of the glutamate receptor GRID2 via PDZ domain. Isoform 2 also interacts with Profilin-2/PFN2 and with the monocarboxylate transporter SLC16A7 via PDZ domain. The interaction of isoform 2 with GRID2 is dependent on GRID2 phosphorylation by PKA. Post-translationally, isoform 2 is palmitoylated. Palmitoylation of isoform 2 is necessary for the enhanced cell surface expression of GRID2, and is also responsible for the accumulation of isoform 2 within dendritic spines. Isoform 1 and isoform 2 are differentially localized, probably modulating GRID2 signaling in neurons. Isoform 1 is expressed in the cerebellum, but not in the cerebral cortex. Isoform 2 is expressed in the cell body of purkinge cells of the cerebellum and weakly expressed in the cerebrum and the brainstem as well as various nuclei of the thalamus. Isoform 2 is highly expressed in the cerebral cortex than in the cerebellum. Isoform 3 is expressed in the cerebellum and cerebrum.

The protein localises to the postsynaptic cell membrane. It localises to the cell projection. The protein resides in the dendritic spine. Its subcellular location is the synapse. It is found in the cell membrane. In terms of biological role, postsynaptic scaffolding protein at the Purkinje cell synapse, where it may serve to link GRID2 with actin cytoskeleton and various signaling molecules. This Mus musculus (Mouse) protein is Delphilin (Grid2ip).